Reading from the N-terminus, the 435-residue chain is MDYKNDINSDDDFDCSNGYSDSYGSNGRMSNPNGLSKAELRKTNKPIMEKRRRARINHCLNELKSLILEAMKKDPARHTKLEKADILEMTVKHLQSVQRQQLNMAIQSDPSVVQKFKTGFVECAEEVNRYVSQMDGIDTGVRQRLSAHLNQCANSLEQIGSMSNFSNGYRGGLFPATAVTAAPTPLFPSLPQDLNNNSRTESSAPAIQMGGLQLIPSRLPSGEFALIMPNTGSAAPPPGPFAWPGSAAGVAAGTASAALASIANPTHLNDYTQSFRMSAFSKPVNTSVPANLPENLIHTLPGQTQLPVKNSTSPPLSPISSISSHCEESRAASPTVDVMSKHSFAGVFSTPPPTSAETSFNTSGSLNLSAGSHDSSGCSRPLAHLQQQQVSSTSGIAKRDREAEAESSDCSLDEPSSKKFLAGAIEKSSSAWRPW.

A compositionally biased stretch (low complexity) spans Gly-18–Gly-27. The segment at Gly-18–Met-48 is disordered. The 58-residue stretch at Leu-40–Val-97 folds into the bHLH domain. Residues Phe-116–Leu-149 enclose the Orange domain. Disordered regions lie at residues Gln-305–Pro-334 and Ser-349–Ser-416. The segment covering Ser-311–Ser-324 has biased composition (low complexity). Polar residues-rich tracts occupy residues Ser-355–Cys-378 and Leu-385–Gly-395. Phosphoserine occurs at positions 407, 408, and 411. Positions Trp-432–Trp-435 match the WRPW motif motif.

Homodimer. Heterodimer with E(spl)mgamma-HLH and E(spl). Transcription repression requires formation of a complex with the corepressor protein Groucho. Interacts (via bHLH motif) with sisA. Interacts with da.

It is found in the nucleus. Transcriptional repressor of genes that require a bHLH protein for their transcription. In the larval brain, required to maintain the self-renewal and identity of type II neuroblasts by regulating the expression of the transcriptional repressor erm together with other self-renewal transcriptional repressors such as klu and E(spl)mgamma-HLH. As part of its role in neuroblasts development, has been shown to be a direct target of the Notch signaling pathway, however might work also independently of N/Notch. In the developing larval and pupal brain, required for mushroom body differentiation. Involved in sex determination and SXL transcription repression when in complex with the corepressor protein Groucho. The polypeptide is Protein deadpan (dpn) (Drosophila melanogaster (Fruit fly)).